Reading from the N-terminus, the 170-residue chain is Viral interleukin-10 homolog (170 aa).

Residues 1–23 (MERRLVVTLQCLVLLYLAPECGG) form the signal peptide. Intrachain disulfides connect Cys-27–Cys-119 and Cys-73–Cys-125. The stretch at 97–145 (EAKDHVNSLGENLKTLRLRLRRCHRFLPCENKSKAVEQIKNAFNKLQEK) forms a coiled coil. A glycan (N-linked (GlcNAc...) asparagine; by host) is linked at Asn-127.

Belongs to the IL-10 family. Homodimer.

The protein resides in the secreted. Functionally, inhibits IFN-gamma synthesis. Down-regulates the expression of the host TAP1 gene (transporter associated with antigen processing), thereby affecting the transport of peptides into the endoplasmic reticulum and subsequent peptide loading by MHC class I molecules. In consequence, infected cells are masked for immune recognition by cytotoxic T-lymphocytes. The chain is Viral interleukin-10 homolog from Epstein-Barr virus (strain AG876) (HHV-4).